The following is a 378-amino-acid chain: Ribosomal RNA large subunit methyltransferase G (378 aa).

It belongs to the methyltransferase superfamily. RlmG family.

The protein resides in the cytoplasm. It carries out the reaction guanosine(1835) in 23S rRNA + S-adenosyl-L-methionine = N(2)-methylguanosine(1835) in 23S rRNA + S-adenosyl-L-homocysteine + H(+). Its function is as follows. Specifically methylates the guanine in position 1835 (m2G1835) of 23S rRNA. This chain is Ribosomal RNA large subunit methyltransferase G, found in Salmonella agona (strain SL483).